Here is a 189-residue protein sequence, read N- to C-terminus: S-protein homolog 26 (189 aa).

The first 25 residues, 1–25, serve as a signal peptide directing secretion; the sequence is MISMNRLSILLFVFAFGLTMMSNTA.

Belongs to the plant self-incompatibility (S1) protein family.

The protein localises to the secreted. This Arabidopsis thaliana (Mouse-ear cress) protein is S-protein homolog 26.